Reading from the N-terminus, the 183-residue chain is ATP synthase subunit delta (183 aa).

This sequence belongs to the ATPase delta chain family. In terms of assembly, F-type ATPases have 2 components, F(1) - the catalytic core - and F(0) - the membrane proton channel. F(1) has five subunits: alpha(3), beta(3), gamma(1), delta(1), epsilon(1). F(0) has three main subunits: a(1), b(2) and c(10-14). The alpha and beta chains form an alternating ring which encloses part of the gamma chain. F(1) is attached to F(0) by a central stalk formed by the gamma and epsilon chains, while a peripheral stalk is formed by the delta and b chains.

It is found in the cell inner membrane. Functionally, f(1)F(0) ATP synthase produces ATP from ADP in the presence of a proton or sodium gradient. F-type ATPases consist of two structural domains, F(1) containing the extramembraneous catalytic core and F(0) containing the membrane proton channel, linked together by a central stalk and a peripheral stalk. During catalysis, ATP synthesis in the catalytic domain of F(1) is coupled via a rotary mechanism of the central stalk subunits to proton translocation. Its function is as follows. This protein is part of the stalk that links CF(0) to CF(1). It either transmits conformational changes from CF(0) to CF(1) or is implicated in proton conduction. The sequence is that of ATP synthase subunit delta from Desulfatibacillum aliphaticivorans.